Reading from the N-terminus, the 239-residue chain is uncharacterized protein (239 aa).

The N-terminal stretch at M1–S19 is a signal peptide. N-linked (GlcNAc...) asparagine glycosylation is found at N44, N58, N72, N92, N109, N136, N172, N192, and N213.

The protein localises to the secreted. This is an uncharacterized protein from Caenorhabditis elegans.